We begin with the raw amino-acid sequence, 170 residues long: uncharacterized protein (170 aa).

Residues 1-148 enclose the Ferritin-like diiron domain; the sequence is MVKSQKVIDV…TIHDFFENAT (148 aa).

This is an uncharacterized protein from Ureaplasma parvum serovar 3 (strain ATCC 700970).